The primary structure comprises 393 residues: Elongation factor Tu (393 aa).

In terms of domain architecture, tr-type G spans 10-203 (KPHVNIGTIG…AVDNYIPEPV (194 aa)). Residues 19–26 (GHVDHGKT) are G1. 19–26 (GHVDHGKT) contributes to the GTP binding site. Mg(2+) is bound at residue Thr-26. The interval 60 to 64 (GITIS) is G2. Residues 81 to 84 (DCPG) are G3. Residues 81-85 (DCPGH) and 136-139 (NKVD) contribute to the GTP site. A G4 region spans residues 136 to 139 (NKVD). The segment at 173 to 175 (SAL) is G5.

This sequence belongs to the TRAFAC class translation factor GTPase superfamily. Classic translation factor GTPase family. EF-Tu/EF-1A subfamily. Monomer.

The protein resides in the cytoplasm. The enzyme catalyses GTP + H2O = GDP + phosphate + H(+). In terms of biological role, GTP hydrolase that promotes the GTP-dependent binding of aminoacyl-tRNA to the A-site of ribosomes during protein biosynthesis. The chain is Elongation factor Tu from Chlorobium phaeovibrioides (strain DSM 265 / 1930) (Prosthecochloris vibrioformis (strain DSM 265)).